The sequence spans 311 residues: Ornithine carbamoyltransferase (311 aa).

Residues Ser-54–Thr-57, Gln-81, Arg-105, and His-132–Gln-135 each bind carbamoyl phosphate. L-ornithine contacts are provided by residues Asn-164, Asp-228, and Ser-232–Met-233. Carbamoyl phosphate is bound by residues Cys-268–Leu-269 and Arg-296.

The protein belongs to the aspartate/ornithine carbamoyltransferase superfamily. OTCase family.

The protein localises to the cytoplasm. The enzyme catalyses carbamoyl phosphate + L-ornithine = L-citrulline + phosphate + H(+). It functions in the pathway amino-acid biosynthesis; L-arginine biosynthesis; L-arginine from L-ornithine and carbamoyl phosphate: step 1/3. Reversibly catalyzes the transfer of the carbamoyl group from carbamoyl phosphate (CP) to the N(epsilon) atom of ornithine (ORN) to produce L-citrulline. The chain is Ornithine carbamoyltransferase from Renibacterium salmoninarum (strain ATCC 33209 / DSM 20767 / JCM 11484 / NBRC 15589 / NCIMB 2235).